A 430-amino-acid polypeptide reads, in one-letter code: Enolase (430 aa).

Position 165 (Q165) interacts with (2R)-2-phosphoglycerate. The Proton donor role is filled by E207. Mg(2+) is bound by residues D244, E287, and D314. (2R)-2-phosphoglycerate-binding residues include K339, R368, S369, and K390. The active-site Proton acceptor is the K339.

It belongs to the enolase family. Component of the RNA degradosome, a multiprotein complex involved in RNA processing and mRNA degradation. Mg(2+) serves as cofactor.

The protein localises to the cytoplasm. The protein resides in the secreted. Its subcellular location is the cell surface. It catalyses the reaction (2R)-2-phosphoglycerate = phosphoenolpyruvate + H2O. The protein operates within carbohydrate degradation; glycolysis; pyruvate from D-glyceraldehyde 3-phosphate: step 4/5. Catalyzes the reversible conversion of 2-phosphoglycerate (2-PG) into phosphoenolpyruvate (PEP). It is essential for the degradation of carbohydrates via glycolysis. The chain is Enolase from Xanthomonas campestris pv. campestris (strain 8004).